We begin with the raw amino-acid sequence, 2055 residues long: Protein PHOTOPERIOD-INDEPENDENT EARLY FLOWERING 1 (2055 aa).

Residues 1–47 (MASKGGKSKPDIVMASKSGKSKPDNESRAKRQKTLEAPKEPRRPKTH) are disordered. Residues 21–47 (SKPDNESRAKRQKTLEAPKEPRRPKTH) show a composition bias toward basic and acidic residues. Residues 29 to 36 (AKRQKTLE) carry the Nuclear localization signal 1 motif. In terms of domain architecture, HSA spans 35 to 107 (LEAPKEPRRP…EEQRLRKVAL (73 aa)). Coiled-coil stretches lie at residues 78–147 (LRAS…LEFL) and 229–250 (EEDEKHFTKRERQEELEALQNE). Disordered regions lie at residues 183–332 (KSDE…SNDS) and 340–359 (ETHSHDLEPGMTTASVKSRK). The span at 208-230 (ELDEDYDLKSEDETEDDEDTIEE) shows a compositional bias: acidic residues. Basic and acidic residues-rich tracts occupy residues 231–243 (DEKHFTKRERQEE) and 267–276 (VSRETSPVKD). Positions 392–416 (EEELAKADNEDHVEEIALLQKESEM) form a coiled coil. Residues 432–461 (KDISEDESESSFAVSEDSIVDSDENRQQAD) form a disordered region. Residues 548–713 (VTMYEKKLNG…WSLMHFLMPH (166 aa)) enclose the Helicase ATP-binding domain. 561-568 (DEMGLGKT) serves as a coordination point for ATP. The DEAH box motif lies at 664–667 (DEAH). A Helicase C-terminal domain is found at 1076–1229 (KLQELAMLLR…NLVIQNGEYN (154 aa)). The tract at residues 1293–1313 (EEAVDNQEFTEEPVERPEDDE) is disordered. Positions 1419-1492 (FEEKEWELDH…EREAAEVAEM (74 aa)) form a coiled coil. 2 consecutive short sequence motifs (nuclear localization signal) follow at residues 1506–1513 (KKKKKAKK) and 1570–1577 (KKRDLIVD). A disordered region spans residues 1577 to 1597 (DTDEEKTSKKKAKKHKKSLPN). A compositionally biased stretch (basic residues) spans 1584–1594 (SKKKAKKHKKS). A Myb-like domain is found at 1673-1727 (SWLPQEDAILCAMVHEYGPNWNFVSGTLYGMTAGGAYRGRYRHPAYCCERYRELI). 2 disordered regions span residues 1843–1864 (ALQDSGPSQPDNTISRSRLQET) and 1951–1977 (KSRTGTKAQSLGKHKLSASDSAKSTKS). Polar residues predominate over residues 1844–1864 (LQDSGPSQPDNTISRSRLQET). The stretch at 2006–2029 (GDREEEEEQEVDEKANSAEIEMIS) forms a coiled coil.

It belongs to the SNF2/RAD54 helicase family. SWR1 subfamily. Component of the SWR1 chromatin-remodeling complex composed of at least ARP6/ESD1/SUF3, PIE1, SWC6, SWC2 and H2AZs (HTA8, HTA9, HTA11). Interacts (via c-terminus) with SWC6 and ARP6 and (via N-terminus) with H2AZs. Expressed in ovules, but not in stamens.

Its subcellular location is the nucleus. It catalyses the reaction ATP + H2O = ADP + phosphate + H(+). In terms of biological role, component of the SWR1 complex which mediates the ATP-dependent exchange of histone H2A for the H2A variant H2A.F/Z leading to transcriptional regulation of selected genes (e.g. FLC) by chromatin remodeling. Probable DNA-dependent ATPase. Not involved in the repression of FLC in gametophytes, but required for the reactivation of FLC in early embryos and for the maintenance of full activation of FLC in late embryos. This is Protein PHOTOPERIOD-INDEPENDENT EARLY FLOWERING 1 (PIE1) from Arabidopsis thaliana (Mouse-ear cress).